A 929-amino-acid polypeptide reads, in one-letter code: MYVKKRDGRQERVQFDKITARVSRLCYGLDMNHVDPVAITQKVISGVYGGVTTAQLDDLAAETAAYMTVTHPDYAILAARIAVSNLHKQTKKQWSLVISELYNYVNPRTGKHSPMIAKDVYECVMRHKDEFDSAIVYDRDFNYQYFGFKTLERSYLLKLDGQIAERPQHMIMRVAVGIWGDDVERVIETYNLMSLKTFTHASPTLFNAGTPQPQLSSCFLVDMKEDSIEGIYDTLKTCAMISKMAGGIGLNIHRIRATGSYIAGTNGTSNGIVPMLRVFNNTARYVDQGGNKRPGAFAIYLEPWHADVFEFLDLRKNHGKEEVRARDLFLALWIPDLFMKRVEQNGQWTLMCPHECPGLADVYGDEFEALYEKYEKEGKGRKTVKAQKLWYAILEAQTETGNPFMLYKDACNRKSNQKNLGTIRSSNLCTEIIEYSAPDEVAVCNLASLALSAFIDYENASYDFKKLHEVTQVVVRNLNKIIDINHYPVKEAHNSNMRHRPIGVGVQGLADAFLALRMPFDSDAASKLNIQIFETIYHAALTASCQLAKEQGPYATYEGSPVSQGILQYDMWNVTPTNLWDWTALKADIKKYGVRNSLLLAPMPTASTSQILGNNECFEPYTSNIYQRRVLAGEFQVVNPWLLRDLVEMGLWSDAMKNRIIAEGGSIQNIQSIPNDIKALYKTVWEISQRTIVKMAADRGAFIDQSQSLNIHMREPTMGKITSMHFAGWKMGLKTGMYYLRTQAAAQPIQFTVDQEALRATDDRVAPAHSGLKKRSPPAGTYTSIVLRENTSGPRPYAQTGVSGTSTPIGTRDVPTPASTPPPTEVPETLVQSDNRPRPLVSPAKSAGFKADLPEPESPKALATDPIVKTEDIGSPLLERKEGQNEDVDEDSQERDENIYSNAPLSEQQVAACAWNPGADPSSCEMCSG.

The region spanning 1 to 92 is the ATP-cone domain; the sequence is MYVKKRDGRQ…VSNLHKQTKK (92 aa). ATP is bound by residues 5–6, 11–17, Thr-53, and Asp-57; these read KR and ERVQFDK. GDP-binding residues include Ser-202 and Ser-217. Cys-218 and Cys-444 are disulfide-bonded. Residues 226 to 228, Lys-243, Arg-256, and 263 to 264 each bind dTTP; these read DSI and AG. Asn-427 lines the GDP pocket. The active-site Proton acceptor is Asn-427. The active-site Cysteine radical intermediate is Cys-429. Residues Glu-431 and 605–608 each bind GDP; that span reads TAST. Glu-431 acts as the Proton acceptor in catalysis. Positions 789-904 are disordered; it reads ENTSGPRPYA…RDENIYSNAP (116 aa). Polar residues predominate over residues 800–809; it reads TGVSGTSTPI. The span at 868 to 884 shows a compositional bias: basic and acidic residues; the sequence is VKTEDIGSPLLERKEGQ. Acidic residues predominate over residues 885–894; that stretch reads NEDVDEDSQE.

It belongs to the ribonucleoside diphosphate reductase large chain family.

The catalysed reaction is a 2'-deoxyribonucleoside 5'-diphosphate + [thioredoxin]-disulfide + H2O = a ribonucleoside 5'-diphosphate + [thioredoxin]-dithiol. Under complex allosteric control mediated by deoxynucleoside triphosphates and ATP binding to separate specificity and activation sites on the large subunit. The type of nucleotide bound at the specificity site determines substrate preference. It seems probable that ATP makes the enzyme reduce CDP and UDP, dGTP favors ADP reduction and dTTP favors GDP reduction. Stimulated by ATP and inhibited by dATP binding to the activity site. In terms of biological role, provides the precursors necessary for DNA synthesis. Catalyzes the biosynthesis of deoxyribonucleotides from the corresponding ribonucleotides. The chain is Ribonucleoside-diphosphate reductase large chain (rnr-1) from Neurospora crassa (strain ATCC 24698 / 74-OR23-1A / CBS 708.71 / DSM 1257 / FGSC 987).